We begin with the raw amino-acid sequence, 157 residues long: 2-C-methyl-D-erythritol 2,4-cyclodiphosphate synthase (157 aa).

2 residues coordinate a divalent metal cation: aspartate 8 and histidine 10. 4-CDP-2-C-methyl-D-erythritol 2-phosphate is bound by residues 8-10 (DVH) and 34-35 (HS). Histidine 42 provides a ligand contact to a divalent metal cation. Residues 56–58 (DIG), 132–135 (TTNE), and arginine 142 each bind 4-CDP-2-C-methyl-D-erythritol 2-phosphate.

Belongs to the IspF family. As to quaternary structure, homotrimer. The cofactor is a divalent metal cation.

The enzyme catalyses 4-CDP-2-C-methyl-D-erythritol 2-phosphate = 2-C-methyl-D-erythritol 2,4-cyclic diphosphate + CMP. The protein operates within isoprenoid biosynthesis; isopentenyl diphosphate biosynthesis via DXP pathway; isopentenyl diphosphate from 1-deoxy-D-xylulose 5-phosphate: step 4/6. In terms of biological role, involved in the biosynthesis of isopentenyl diphosphate (IPP) and dimethylallyl diphosphate (DMAPP), two major building blocks of isoprenoid compounds. Catalyzes the conversion of 4-diphosphocytidyl-2-C-methyl-D-erythritol 2-phosphate (CDP-ME2P) to 2-C-methyl-D-erythritol 2,4-cyclodiphosphate (ME-CPP) with a corresponding release of cytidine 5-monophosphate (CMP). In Chlorobium luteolum (strain DSM 273 / BCRC 81028 / 2530) (Pelodictyon luteolum), this protein is 2-C-methyl-D-erythritol 2,4-cyclodiphosphate synthase.